Here is a 61-residue protein sequence, read N- to C-terminus: Small ribosomal subunit protein uS14 (61 aa).

4 residues coordinate Zn(2+): Cys24, Cys27, Cys40, and Cys43.

This sequence belongs to the universal ribosomal protein uS14 family. Zinc-binding uS14 subfamily. Part of the 30S ribosomal subunit. Contacts proteins S3 and S10. The cofactor is Zn(2+).

Its function is as follows. Binds 16S rRNA, required for the assembly of 30S particles and may also be responsible for determining the conformation of the 16S rRNA at the A site. This Clostridium kluyveri (strain NBRC 12016) protein is Small ribosomal subunit protein uS14.